The primary structure comprises 179 residues: Peptide deformylase 2 (179 aa).

Positions 104 and 146 each coordinate Fe cation. Residue Glu147 is part of the active site. His150 is a binding site for Fe cation.

The protein belongs to the polypeptide deformylase family. Fe(2+) is required as a cofactor.

The enzyme catalyses N-terminal N-formyl-L-methionyl-[peptide] + H2O = N-terminal L-methionyl-[peptide] + formate. Removes the formyl group from the N-terminal Met of newly synthesized proteins. Requires at least a dipeptide for an efficient rate of reaction. N-terminal L-methionine is a prerequisite for activity but the enzyme has broad specificity at other positions. This is Peptide deformylase 2 from Streptomyces coelicolor (strain ATCC BAA-471 / A3(2) / M145).